Consider the following 502-residue polypeptide: Zinc finger protein 3 homolog (502 aa).

Basic and acidic residues-rich tracts occupy residues 1 to 13 (MGTE…PKEE) and 80 to 93 (PSSE…ESER). Disordered stretches follow at residues 1-26 (MGTE…SLLE) and 47-103 (LEGH…NLVT). Residues Lys6 and Lys11 each participate in a glycyl lysine isopeptide (Lys-Gly) (interchain with G-Cter in SUMO2) cross-link. 13 C2H2-type zinc fingers span residues 141–163 (HTCK…MRVH), 169–191 (FECK…LRIH), 197–219 (FACN…HRIH), 225–247 (YKCE…QRIH), 253–275 (YECN…QRIH), 281–303 (HECN…QKIH), 309–331 (YLCN…QRIH), 337–359 (YECN…IRIH), 365–387 (YVCK…ERIH), 393–415 (YECF…QRIH), 421–443 (HQCN…QKIH), 449–471 (YECS…QRIH), and 477–499 (YECQ…QSVH).

It belongs to the krueppel C2H2-type zinc-finger protein family.

The protein localises to the nucleus. May be involved in transcriptional regulation. The polypeptide is Zinc finger protein 3 homolog (ZFP3) (Homo sapiens (Human)).